We begin with the raw amino-acid sequence, 90 residues long: Phosphocarrier protein NPr (90 aa).

The region spanning 2–90 is the HPr domain; it reads TVKQTVEITN…ALFNSGFDED (89 aa). The active-site Pros-phosphohistidine intermediate is the His-16.

It belongs to the HPr family.

It is found in the cytoplasm. In terms of biological role, component of the phosphoenolpyruvate-dependent nitrogen-metabolic phosphotransferase system (nitrogen-metabolic PTS), that seems to be involved in regulating nitrogen metabolism. The phosphoryl group from phosphoenolpyruvate (PEP) is transferred to the phosphoryl carrier protein NPr by enzyme I-Ntr. Phospho-NPr then transfers it to EIIA-Ntr. Could function in the transcriptional regulation of sigma-54 dependent operons in conjunction with the NPr (PtsO) and EIIA-Ntr (PtsN) proteins. In Escherichia coli O157:H7, this protein is Phosphocarrier protein NPr (ptsO).